The sequence spans 176 residues: Ribose 1,5-bisphosphate phosphokinase PhnN (176 aa).

10-17 lines the ATP pocket; the sequence is GPSGAGKD.

This sequence belongs to the ribose 1,5-bisphosphokinase family.

It catalyses the reaction alpha-D-ribose 1,5-bisphosphate + ATP = 5-phospho-alpha-D-ribose 1-diphosphate + ADP. The protein operates within metabolic intermediate biosynthesis; 5-phospho-alpha-D-ribose 1-diphosphate biosynthesis; 5-phospho-alpha-D-ribose 1-diphosphate from D-ribose 5-phosphate (route II): step 3/3. Its function is as follows. Catalyzes the phosphorylation of ribose 1,5-bisphosphate to 5-phospho-D-ribosyl alpha-1-diphosphate (PRPP). The chain is Ribose 1,5-bisphosphate phosphokinase PhnN from Methylobacterium radiotolerans (strain ATCC 27329 / DSM 1819 / JCM 2831 / NBRC 15690 / NCIMB 10815 / 0-1).